Consider the following 127-residue polypeptide: Evasin P467 (127 aa).

A signal peptide spans 1-21; that stretch reads MALKACITVIAVVYVVQVVRG. 4 cysteine pairs are disulfide-bonded: cysteine 42/cysteine 63, cysteine 59/cysteine 100, cysteine 76/cysteine 105, and cysteine 95/cysteine 114. Residues asparagine 49 and asparagine 94 are each glycosylated (N-linked (GlcNAc...) asparagine).

Its subcellular location is the secreted. Its function is as follows. Salivary chemokine-binding protein which binds to host chemokines CCL1, CCL2, CCL3 and CCL5. The chain is Evasin P467 from Rhipicephalus pulchellus (Yellow backed tick).